The sequence spans 342 residues: Dihydroorotase (342 aa).

2 residues coordinate Zn(2+): His-13 and His-15. Substrate-binding positions include 15–17 and Asn-41; that span reads HLR. Residues Lys-98, His-135, and His-173 each contribute to the Zn(2+) site. At Lys-98 the chain carries N6-carboxylysine. Position 135 (His-135) interacts with substrate. Leu-218 serves as a coordination point for substrate. Position 246 (Asp-246) interacts with Zn(2+). Asp-246 is a catalytic residue. The substrate site is built by His-250 and Ala-262.

It belongs to the metallo-dependent hydrolases superfamily. DHOase family. Class II DHOase subfamily. As to quaternary structure, homodimer. Requires Zn(2+) as cofactor.

It carries out the reaction (S)-dihydroorotate + H2O = N-carbamoyl-L-aspartate + H(+). It participates in pyrimidine metabolism; UMP biosynthesis via de novo pathway; (S)-dihydroorotate from bicarbonate: step 3/3. In terms of biological role, catalyzes the reversible cyclization of carbamoyl aspartate to dihydroorotate. This Vibrio vulnificus (strain YJ016) protein is Dihydroorotase.